The following is a 282-amino-acid chain: Probable ribosomal RNA small subunit methyltransferase A (282 aa).

S-adenosyl-L-methionine-binding residues include histidine 24, leucine 26, glycine 51, glutamate 72, aspartate 100, and asparagine 115.

The protein belongs to the class I-like SAM-binding methyltransferase superfamily. rRNA adenine N(6)-methyltransferase family. RsmA subfamily.

The protein resides in the cytoplasm. In terms of biological role, specifically dimethylates two adjacent adenosines in the loop of a conserved hairpin near the 3'-end of 16S rRNA in the 30S particle. May play a critical role in biogenesis of 30S subunits. The protein is Probable ribosomal RNA small subunit methyltransferase A of Halobacterium salinarum (strain ATCC 29341 / DSM 671 / R1).